Consider the following 515-residue polypeptide: ATP synthase subunit alpha (515 aa).

169-176 (GDRQTGKT) is a binding site for ATP.

It belongs to the ATPase alpha/beta chains family. As to quaternary structure, F-type ATPases have 2 components, CF(1) - the catalytic core - and CF(0) - the membrane proton channel. CF(1) has five subunits: alpha(3), beta(3), gamma(1), delta(1), epsilon(1). CF(0) has three main subunits: a(1), b(2) and c(9-12). The alpha and beta chains form an alternating ring which encloses part of the gamma chain. CF(1) is attached to CF(0) by a central stalk formed by the gamma and epsilon chains, while a peripheral stalk is formed by the delta and b chains.

It is found in the cell inner membrane. It carries out the reaction ATP + H2O + 4 H(+)(in) = ADP + phosphate + 5 H(+)(out). Produces ATP from ADP in the presence of a proton gradient across the membrane. The alpha chain is a regulatory subunit. This Neisseria meningitidis serogroup C (strain 053442) protein is ATP synthase subunit alpha.